The sequence spans 274 residues: Diaminopimelate epimerase (274 aa).

Residues asparagine 11, glutamine 44, and asparagine 64 each contribute to the substrate site. Cysteine 73 acts as the Proton donor in catalysis. Substrate is bound by residues 74-75 (GN), asparagine 157, asparagine 190, and 208-209 (ER). Cysteine 217 (proton acceptor) is an active-site residue. Residue 218-219 (GS) coordinates substrate.

The protein belongs to the diaminopimelate epimerase family. Homodimer.

The protein localises to the cytoplasm. It catalyses the reaction (2S,6S)-2,6-diaminopimelate = meso-2,6-diaminopimelate. The protein operates within amino-acid biosynthesis; L-lysine biosynthesis via DAP pathway; DL-2,6-diaminopimelate from LL-2,6-diaminopimelate: step 1/1. Functionally, catalyzes the stereoinversion of LL-2,6-diaminopimelate (L,L-DAP) to meso-diaminopimelate (meso-DAP), a precursor of L-lysine and an essential component of the bacterial peptidoglycan. The polypeptide is Diaminopimelate epimerase (Proteus mirabilis (strain HI4320)).